The following is a 431-amino-acid chain: 2-oxoisovalerate dehydrogenase subunit alpha, mitochondrial (431 aa).

140-142 is a binding site for thiamine diphosphate; it reads QYR. K(+) is bound by residues Ser-189, Thr-194, and Gln-195.

The protein belongs to the BCKDHA family. It depends on thiamine diphosphate as a cofactor.

The protein resides in the mitochondrion matrix. It carries out the reaction N(6)-[(R)-lipoyl]-L-lysyl-[protein] + 3-methyl-2-oxobutanoate + H(+) = N(6)-[(R)-S(8)-2-methylpropanoyldihydrolipoyl]-L-lysyl-[protein] + CO2. It functions in the pathway lipid metabolism; fatty acid biosynthesis. The branched-chain alpha-keto dehydrogenase complex catalyzes the overall conversion of alpha-keto acids to acyl-CoA and CO(2). It contains multiple copies of three enzymatic components: branched-chain alpha-keto acid decarboxylase (E1), lipoamide acyltransferase (E2) and lipoamide dehydrogenase (E3). Required for the production of the monomethyl branched-chain fatty acids (mmBCFAs) isopentadecanoate (C15iso) and isoheptadecanoate (C17iso). The chain is 2-oxoisovalerate dehydrogenase subunit alpha, mitochondrial from Caenorhabditis elegans.